A 379-amino-acid chain; its full sequence is Wnt inhibitory factor 1 (379 aa).

A signal peptide spans 1 to 28 (MARRRAFPAFALRLWSILPCLLLLRADA). Residues 38–177 (LWIDAHQARV…PQNAIFFKTC (140 aa)) form the WIF domain. Asn88 carries N-linked (GlcNAc...) asparagine glycosylation. 7 cysteine pairs are disulfide-bonded: Cys140–Cys177, Cys182–Cys192, Cys186–Cys198, Cys200–Cys209, Cys214–Cys224, Cys218–Cys230, and Cys232–Cys241. EGF-like domains are found at residues 178 to 210 (QQAE…PHCE), 211 to 242 (KALC…VNCD), 243 to 271 (KANC…LEGE), 274 to 306 (ELSK…DLCS), and 307 to 338 (KPVC…RHCN). An N-linked (GlcNAc...) asparagine glycan is attached at Asn245. Intrachain disulfides connect Cys246-Cys256, Cys250-Cys262, Cys278-Cys288, Cys282-Cys294, Cys296-Cys305, Cys310-Cys320, Cys314-Cys326, and Cys328-Cys337. The segment at 348–379 (APRPAGAGLERHTPSLKKAEDRRDPPESNYIW) is disordered. Over residues 356–373 (LERHTPSLKKAEDRRDPP) the composition is skewed to basic and acidic residues.

As to quaternary structure, interacts with MYOC. In terms of tissue distribution, expression highest in heart and lung. Lower in brain and eye.

It is found in the secreted. In terms of biological role, binds to WNT proteins and inhibits their activities. May be involved in mesoderm segmentation. In Mus musculus (Mouse), this protein is Wnt inhibitory factor 1 (Wif1).